Reading from the N-terminus, the 1297-residue chain is Insulin receptor-related protein (1297 aa).

A signal peptide spans 1–26; sequence MAVPSLWPWGACLPVIFLSLGFGLDT. A glycan (N-linked (GlcNAc...) asparagine) is linked at N47. 9 disulfides stabilise this stretch: C214-C222, C216-C228, C229-C237, C233-C246, C249-C258, C262-C274, C280-C300, C304-C317, and C320-C324. N-linked (GlcNAc...) asparagine glycosylation is present at N311. N-linked (GlcNAc...) asparagine glycans are attached at residues N411, N492, N528, N616, and N634. Fibronectin type-III domains are found at residues 483–603 and 607–707; these read QTRT…TLPA and VPQD…AQEA. C657 and C864 are oxidised to a cystine. Disordered stretches follow at residues 666–687 and 732–758; these read SNND…ESDC and SINK…GNSS. Positions 675–685 are enriched in acidic residues; that stretch reads EDGDPEAEMES. The Extracellular segment spans residues 747-921; that stretch reads AAGPLRLGGN…PEEEDAGGLH (175 aa). N-linked (GlcNAc...) asparagine glycosylation is found at N756, N885, and N898. Positions 818–913 constitute a Fibronectin type-III 3 domain; it reads IPGKVAWEAS…SVAFYILGPE (96 aa). A helical transmembrane segment spans residues 922-943; the sequence is VLLTATPVGLTLLIVLAALGFF. At 944–1297 the chain is on the cytoplasmic side; the sequence is YGKKRNRTLY…CSPQNGGPGH (354 aa). The Protein kinase domain maps to 979–1254; the sequence is ISIIRELGQG…SIQEELRPSF (276 aa). Residues 985 to 993 and K1013 contribute to the ATP site; that span reads LGQGSFGMV. The active-site Proton acceptor is the D1115. 2 positions are modified to phosphotyrosine; by autocatalysis: Y1145 and Y1146. Positions 1267–1297 are disordered; sequence GARGSLPTTDAEPDSSPTPRDCSPQNGGPGH. Residues 1281 to 1297 show a composition bias toward polar residues; sequence SSPTPRDCSPQNGGPGH.

The protein belongs to the protein kinase superfamily. Tyr protein kinase family. Insulin receptor subfamily. As to quaternary structure, probable tetramer of 2 alpha and 2 beta chains linked by disulfide bonds. The alpha chains contribute to the formation of the ligand-binding domain, while the beta chains carry the kinase domain. Post-translationally, autophosphorylated on tyrosine residues between pH 7.9 and pH 10.5.

Its subcellular location is the membrane. The catalysed reaction is L-tyrosyl-[protein] + ATP = O-phospho-L-tyrosyl-[protein] + ADP + H(+). Functionally, receptor with tyrosine-protein kinase activity. Functions as a pH sensing receptor which is activated by increased extracellular pH. Activates an intracellular signaling pathway that involves IRS1 and AKT1/PKB. The protein is Insulin receptor-related protein (INSRR) of Homo sapiens (Human).